A 115-amino-acid polypeptide reads, in one-letter code: Evasin P1181 (115 aa).

A signal peptide spans 1–25 (MALNWSFRVIFVSAMWCALLKFATL). Cystine bridges form between cysteine 38–cysteine 58, cysteine 54–cysteine 94, cysteine 70–cysteine 99, and cysteine 89–cysteine 108. 3 N-linked (GlcNAc...) asparagine glycosylation sites follow: asparagine 45, asparagine 72, and asparagine 103.

The protein localises to the secreted. Salivary chemokine-binding protein which binds to host chemokines CCL3 and CCL4. This Amblyomma maculatum (Gulf Coast tick) protein is Evasin P1181.